A 108-amino-acid chain; its full sequence is UPF0102 protein Sfri_0388 (108 aa).

The protein belongs to the UPF0102 family.

This Shewanella frigidimarina (strain NCIMB 400) protein is UPF0102 protein Sfri_0388.